The following is a 270-amino-acid chain: Fructose-2,6-bisphosphatase TIGAR (270 aa).

The Tele-phosphohistidine intermediate role is filled by H11. At K50 the chain carries N6-acetyllysine. Residue E89 is the Proton donor/acceptor of the active site.

This sequence belongs to the phosphoglycerate mutase family. As to quaternary structure, interacts with HK2; the interaction increases hexokinase HK2 activity in a hypoxia- and HIF1A-dependent manner, resulting in the regulation of mitochondrial membrane potential, thus increasing NADPH production and decreasing intracellular ROS levels.

The protein resides in the cytoplasm. Its subcellular location is the nucleus. It localises to the mitochondrion. The enzyme catalyses beta-D-fructose 2,6-bisphosphate + H2O = beta-D-fructose 6-phosphate + phosphate. Fructose-bisphosphatase hydrolyzing fructose-2,6-bisphosphate as well as fructose-1,6-bisphosphate. Acts as a negative regulator of glycolysis by lowering intracellular levels of fructose-2,6-bisphosphate in a p53/TP53-dependent manner, resulting in the pentose phosphate pathway (PPP) activation and NADPH production. Contributes to the generation of reduced glutathione to cause a decrease in intracellular reactive oxygen species (ROS) content, correlating with its ability to protect cells from oxidative or metabolic stress-induced cell death. Plays a role in promoting protection against cell death during hypoxia by decreasing mitochondria ROS levels in a HK2-dependent manner through a mechanism that is independent of its fructose-bisphosphatase activity. In response to cardiac damage stress, mediates p53-induced inhibition of myocyte mitophagy through ROS levels reduction and the subsequent inactivation of BNIP3. Reduced mitophagy results in an enhanced apoptotic myocyte cell death, and exacerbates cardiac damage. Plays a role in adult intestinal regeneration; contributes to the growth, proliferation and survival of intestinal crypts following tissue ablation. Plays a neuroprotective role against ischemic brain damage by enhancing PPP flux and preserving mitochondria functions. Protects glioma cells from hypoxia- and ROS-induced cell death by inhibiting glycolysis and activating mitochondrial energy metabolism and oxygen consumption in a TKTL1-dependent and p53/TP53-independent manner. Plays a role in cancer cell survival by promoting DNA repair through activating PPP flux in a CDK5-ATM-dependent signaling pathway during hypoxia and/or genome stress-induced DNA damage responses. Involved in intestinal tumor progression. This chain is Fructose-2,6-bisphosphatase TIGAR, found in Bos taurus (Bovine).